Reading from the N-terminus, the 1150-residue chain is RNA polymerase-associated protein CTR9 (1150 aa).

13 TPR repeats span residues 143–176 (VRAW…NPKN), 177–210 (VLPL…CRHT), 212–245 (ADLR…EPYN), 247–282 (SAMC…QTDH), 320–353 (AEAF…NNGE), 355–388 (TLAH…LPNN), 432–464 (YEAC…LVTN), 471–504 (PEML…LEEQ), 594–627 (PIVW…IFNN), 643–677 (FEQL…QPKN), 679–711 (YAAN…TSEF), 712–745 (YDVW…FRKE), and 748–781 (STLQ…QLDN). Coiled coils occupy residues 848–916 (AEEA…NLRL) and 972–1028 (ERRE…AKQS). Residues 935-1150 (KRRGGGGRKR…KKKVIESDSD (216 aa)) are disordered. Basic residues predominate over residues 975-992 (ERRKKDKAAKKASRKKRE). Basic and acidic residues-rich tracts occupy residues 993–1005 (RRDS…NRRD), 1013–1024 (EERDRKLQEKLS), 1060–1084 (DPRP…ETTT), and 1132–1150 (RDSD…SDSD).

In terms of assembly, component of the PAF1 complex which consists of at least cdc-73, ctr-9, leo-1, pafo-1 and rtfo-1.

The protein resides in the nucleus. Its function is as follows. Component of the PAF1 complex which is a multifunctional complex involved in transcription initiation via genetic interactions with TATA-binding proteins, elongation and transcription-coupled histone modification. Ctr-9 is required for epidermal microtubule organization during morphogenesis. The sequence is that of RNA polymerase-associated protein CTR9 from Caenorhabditis elegans.